Here is a 225-residue protein sequence, read N- to C-terminus: Leucyl/phenylalanyl-tRNA--protein transferase (225 aa).

This sequence belongs to the L/F-transferase family.

The protein localises to the cytoplasm. It carries out the reaction N-terminal L-lysyl-[protein] + L-leucyl-tRNA(Leu) = N-terminal L-leucyl-L-lysyl-[protein] + tRNA(Leu) + H(+). The enzyme catalyses N-terminal L-arginyl-[protein] + L-leucyl-tRNA(Leu) = N-terminal L-leucyl-L-arginyl-[protein] + tRNA(Leu) + H(+). The catalysed reaction is L-phenylalanyl-tRNA(Phe) + an N-terminal L-alpha-aminoacyl-[protein] = an N-terminal L-phenylalanyl-L-alpha-aminoacyl-[protein] + tRNA(Phe). In terms of biological role, functions in the N-end rule pathway of protein degradation where it conjugates Leu, Phe and, less efficiently, Met from aminoacyl-tRNAs to the N-termini of proteins containing an N-terminal arginine or lysine. The protein is Leucyl/phenylalanyl-tRNA--protein transferase of Nitrobacter hamburgensis (strain DSM 10229 / NCIMB 13809 / X14).